The primary structure comprises 258 residues: Small ribosomal subunit protein uS2 (258 aa).

A disordered region spans residues 226–258; sequence AQNKDVEPVADKDEKPEAAPVDEAETATETTGE. Residues 229 to 242 show a composition bias toward basic and acidic residues; the sequence is KDVEPVADKDEKPE. The segment covering 245 to 258 has biased composition (acidic residues); sequence PVDEAETATETTGE.

This sequence belongs to the universal ribosomal protein uS2 family.

The chain is Small ribosomal subunit protein uS2 from Solidesulfovibrio magneticus (strain ATCC 700980 / DSM 13731 / RS-1) (Desulfovibrio magneticus).